We begin with the raw amino-acid sequence, 270 residues long: Surfeit locus protein 4 homolog (270 aa).

Helical transmembrane passes span 65-85 (FLATVFVLVNLLGQLGGCGMV), 93-113 (IAVGLLFFIVVLQTVAYSILW), 115-135 (FQFLLRNFALIGALLLVLAEA), 178-198 (LSVWQVIQDIIGSILMVLVVL), 206-226 (ALILVALLTILNLYHNAWWTI), and 243-263 (TLSVIGGLLMIVSLGPGGVSM). The Di-lysine motif signature appears at 267–270 (KKKW).

This sequence belongs to the SURF4 family.

The protein localises to the endoplasmic reticulum membrane. Its function is as follows. Endoplasmic reticulum cargo receptor that mediates the export of lipoproteins by recruiting cargos into COPII vesicles to facilitate their secretion. This is Surfeit locus protein 4 homolog from Drosophila melanogaster (Fruit fly).